Here is a 462-residue protein sequence, read N- to C-terminus: GTPase Der (462 aa).

2 consecutive EngA-type G domains span residues 2–164 (KKIA…PKKE) and 195–366 (INVA…KNYS). GTP-binding positions include 8 to 15 (GKPNVGKS), 55 to 59 (DTGGI), 116 to 119 (NKID), 201 to 208 (GRVNVGKS), 248 to 252 (DTAGI), and 312 to 315 (NKWD). Positions 367 to 451 (TWLPTGQLNR…PIILRPRKRG (85 aa)) constitute a KH-like domain.

This sequence belongs to the TRAFAC class TrmE-Era-EngA-EngB-Septin-like GTPase superfamily. EngA (Der) GTPase family. As to quaternary structure, associates with the 50S ribosomal subunit.

GTPase that plays an essential role in the late steps of ribosome biogenesis. In Nitratiruptor sp. (strain SB155-2), this protein is GTPase Der.